The primary structure comprises 204 residues: Urease accessory protein UreG (204 aa).

G12 to T19 contacts GTP.

This sequence belongs to the SIMIBI class G3E GTPase family. UreG subfamily. Homodimer. UreD, UreF and UreG form a complex that acts as a GTP-hydrolysis-dependent molecular chaperone, activating the urease apoprotein by helping to assemble the nickel containing metallocenter of UreC. The UreE protein probably delivers the nickel.

It localises to the cytoplasm. In terms of biological role, facilitates the functional incorporation of the urease nickel metallocenter. This process requires GTP hydrolysis, probably effectuated by UreG. The sequence is that of Urease accessory protein UreG from Pseudomonas fluorescens (strain SBW25).